A 456-amino-acid polypeptide reads, in one-letter code: CBL-interacting serine/threonine-protein kinase 2 (456 aa).

The 255-residue stretch at 12–266 (YEVGRLLGQG…IAKIKESSWF (255 aa)) folds into the Protein kinase domain. Residues 18-26 (LGQGTFAKV) and lysine 41 each bind ATP. The active-site Proton acceptor is the aspartate 134. The interval 152–181 (DFGLSALADCKRQDGLLHTTCGTPAYVAPE) is activation loop. A Phosphoserine modification is found at serine 156. Threonine 170 bears the Phosphothreonine mark. Residues 280-309 (MEKQQVREATNPMEAGGSGQNENGENHEPP) are disordered. The 25-residue stretch at 309-333 (PRLATLNAFDIIALSTGFGLAGLFG) folds into the NAF domain. Residues 338–367 (KRESRFASQKPASEIISKLVEVAKCLKLKI) are PPI.

The protein belongs to the protein kinase superfamily. CAMK Ser/Thr protein kinase family. SNF1 subfamily. Interacts with CBL2, CBL3 and CBL5. Mn(2+) is required as a cofactor.

It catalyses the reaction L-seryl-[protein] + ATP = O-phospho-L-seryl-[protein] + ADP + H(+). The enzyme catalyses L-threonyl-[protein] + ATP = O-phospho-L-threonyl-[protein] + ADP + H(+). CIPK serine-threonine protein kinases interact with CBL proteins. Binding of a CBL protein to the regulatory NAF domain of CIPK protein lead to the activation of the kinase in a calcium-dependent manner. This chain is CBL-interacting serine/threonine-protein kinase 2 (CIPK2), found in Arabidopsis thaliana (Mouse-ear cress).